Consider the following 233-residue polypeptide: 2,3,4,5-tetrahydropyridine-2,6-dicarboxylate N-acetyltransferase (233 aa).

Belongs to the transferase hexapeptide repeat family. DapH subfamily.

The enzyme catalyses (S)-2,3,4,5-tetrahydrodipicolinate + acetyl-CoA + H2O = L-2-acetamido-6-oxoheptanedioate + CoA. The protein operates within amino-acid biosynthesis; L-lysine biosynthesis via DAP pathway; LL-2,6-diaminopimelate from (S)-tetrahydrodipicolinate (acetylase route): step 1/3. In terms of biological role, catalyzes the transfer of an acetyl group from acetyl-CoA to tetrahydrodipicolinate. This chain is 2,3,4,5-tetrahydropyridine-2,6-dicarboxylate N-acetyltransferase, found in Oenococcus oeni (strain ATCC BAA-331 / PSU-1).